The sequence spans 129 residues: Large ribosomal subunit protein bL20 (129 aa).

It belongs to the bacterial ribosomal protein bL20 family.

In terms of biological role, binds directly to 23S ribosomal RNA and is necessary for the in vitro assembly process of the 50S ribosomal subunit. It is not involved in the protein synthesizing functions of that subunit. The chain is Large ribosomal subunit protein bL20 from Kineococcus radiotolerans (strain ATCC BAA-149 / DSM 14245 / SRS30216).